The following is a 62-amino-acid chain: Small ribosomal subunit protein uS14 (62 aa).

The Zn(2+) site is built by cysteine 25, cysteine 28, cysteine 41, and cysteine 44.

This sequence belongs to the universal ribosomal protein uS14 family. Zinc-binding uS14 subfamily. In terms of assembly, part of the 30S ribosomal subunit. Contacts proteins S3 and S10. It depends on Zn(2+) as a cofactor.

Its function is as follows. Binds 16S rRNA, required for the assembly of 30S particles and may also be responsible for determining the conformation of the 16S rRNA at the A site. In Sulfurihydrogenibium sp. (strain YO3AOP1), this protein is Small ribosomal subunit protein uS14.